Consider the following 309-residue polypeptide: tRNA dimethylallyltransferase (309 aa).

11-18 (GPTASGKS) is an ATP binding site. Substrate is bound at residue 13 to 18 (TASGKS). Interaction with substrate tRNA regions lie at residues 36–39 (DSMQ) and 160–164 (QRLIR).

Belongs to the IPP transferase family. As to quaternary structure, monomer. It depends on Mg(2+) as a cofactor.

The catalysed reaction is adenosine(37) in tRNA + dimethylallyl diphosphate = N(6)-dimethylallyladenosine(37) in tRNA + diphosphate. In terms of biological role, catalyzes the transfer of a dimethylallyl group onto the adenine at position 37 in tRNAs that read codons beginning with uridine, leading to the formation of N6-(dimethylallyl)adenosine (i(6)A). The chain is tRNA dimethylallyltransferase from Rickettsia felis (strain ATCC VR-1525 / URRWXCal2) (Rickettsia azadi).